Here is a 239-residue protein sequence, read N- to C-terminus: Phosducin-like protein 3 (239 aa).

The residue at position 1 (methionine 1) is an N-acetylmethionine. Positions 32–180 (EAEEEQRILQ…EGDIKAQFIG (149 aa)) constitute a Phosducin domain. A Phosphoserine modification is found at serine 43. The thioredoxin fold stretch occupies residues 91–239 (FGEVLEISGK…MKRDSDSEGD (149 aa)). Interaction with XIAP stretches follow at residues 97-99 (ISG) and 153-155 (TCI). Serine 234 and serine 236 each carry phosphoserine.

Belongs to the phosducin family. Interacts (via thioredoxin fold region) with KDR/VEGFR2 (via juxtamembrane domain). Forms ternary complexes with the chaperonin CCT complex and actin substrate, leading to inhibition of actin folding. Interacts with XIAP (via BIR 3 and RING domain). Interacts with HSP90AA1 and HSP90AB1. N-terminal methionine acetylation destabilizes the protein. Expressed in endothelial cells (at protein level). Expressed in all tissues examined including spleen, thymus, prostate, testis, ovary, small intestine and colon.

The protein resides in the cytoplasm. Its subcellular location is the perinuclear region. It localises to the endoplasmic reticulum. Its function is as follows. Acts as a chaperone for the angiogenic VEGF receptor KDR/VEGFR2, increasing its abundance by inhibiting its ubiquitination and degradation. Inhibits the folding activity of the chaperonin-containing T-complex (CCT) which leads to inhibition of cytoskeletal actin folding. Acts as a chaperone during heat shock alongside HSP90 and HSP40/70 chaperone complexes. Modulates the activation of caspases during apoptosis. In Homo sapiens (Human), this protein is Phosducin-like protein 3 (PDCL3).